The chain runs to 87 residues: U-scoloptoxin(23)-Er1a (87 aa).

A signal peptide spans 1 to 29 (MSLIVVRTHSFLFVLVLLLFASVFHSVDS). Residues 32-54 (FNPNGRYGRRDSASALSDASENK) are disordered.

Belongs to the scoloptoxin-23 family. In terms of tissue distribution, expressed by the venom gland.

The protein resides in the secreted. The chain is U-scoloptoxin(23)-Er1a from Ethmostigmus rubripes (Giant centipede).